The chain runs to 126 residues: Small ribosomal subunit protein uS13 (126 aa).

A disordered region spans residues Arg94 to Lys126. The span at Arg108–Lys126 shows a compositional bias: basic residues.

Belongs to the universal ribosomal protein uS13 family. Part of the 30S ribosomal subunit. Forms a loose heterodimer with protein S19. Forms two bridges to the 50S subunit in the 70S ribosome.

Located at the top of the head of the 30S subunit, it contacts several helices of the 16S rRNA. In the 70S ribosome it contacts the 23S rRNA (bridge B1a) and protein L5 of the 50S subunit (bridge B1b), connecting the 2 subunits; these bridges are implicated in subunit movement. Contacts the tRNAs in the A and P-sites. In Streptomyces griseus subsp. griseus (strain JCM 4626 / CBS 651.72 / NBRC 13350 / KCC S-0626 / ISP 5235), this protein is Small ribosomal subunit protein uS13.